Here is a 452-residue protein sequence, read N- to C-terminus: Trigger factor (452 aa).

The region spanning Gly-171–Ala-256 is the PPIase FKBP-type domain.

The protein belongs to the FKBP-type PPIase family. Tig subfamily.

It localises to the cytoplasm. The catalysed reaction is [protein]-peptidylproline (omega=180) = [protein]-peptidylproline (omega=0). Involved in protein export. Acts as a chaperone by maintaining the newly synthesized protein in an open conformation. Functions as a peptidyl-prolyl cis-trans isomerase. This Afipia carboxidovorans (strain ATCC 49405 / DSM 1227 / KCTC 32145 / OM5) (Oligotropha carboxidovorans) protein is Trigger factor.